The following is a 439-amino-acid chain: Protein translocase subunit SecY (439 aa).

10 helical membrane passes run 28–48 (ILIT…PVPG), 73–93 (IFSG…LPYI), 127–147 (LTRY…AVWV), 156–176 (PLFT…VMWI), 179–199 (LITE…NIVA), 220–240 (VGGI…IVFV), 276–296 (GVMP…LANF), 318–338 (IYAL…SSLI), 375–395 (LTIL…AVEG), and 401–421 (TFQG…IDTA).

Belongs to the SecY/SEC61-alpha family. Component of the Sec protein translocase complex. Heterotrimer consisting of SecY, SecE and SecG subunits. The heterotrimers can form oligomers, although 1 heterotrimer is thought to be able to translocate proteins. Interacts with the ribosome. Interacts with SecDF, and other proteins may be involved. Interacts with SecA.

It is found in the cell inner membrane. The protein resides in the cellular thylakoid membrane. The central subunit of the protein translocation channel SecYEG. Consists of two halves formed by TMs 1-5 and 6-10. These two domains form a lateral gate at the front which open onto the bilayer between TMs 2 and 7, and are clamped together by SecE at the back. The channel is closed by both a pore ring composed of hydrophobic SecY resides and a short helix (helix 2A) on the extracellular side of the membrane which forms a plug. The plug probably moves laterally to allow the channel to open. The ring and the pore may move independently. In Synechococcus elongatus (strain ATCC 33912 / PCC 7942 / FACHB-805) (Anacystis nidulans R2), this protein is Protein translocase subunit SecY.